The following is a 147-amino-acid chain: 3-dehydroquinate dehydratase (147 aa).

Residue Tyr23 is the Proton acceptor of the active site. Substrate-binding residues include Asn74, His80, and Asp87. The active-site Proton donor is His100. Substrate-binding positions include 101–102 (LS) and Arg111.

Belongs to the type-II 3-dehydroquinase family. Homododecamer.

It catalyses the reaction 3-dehydroquinate = 3-dehydroshikimate + H2O. Its pathway is metabolic intermediate biosynthesis; chorismate biosynthesis; chorismate from D-erythrose 4-phosphate and phosphoenolpyruvate: step 3/7. Its function is as follows. Catalyzes a trans-dehydration via an enolate intermediate. The protein is 3-dehydroquinate dehydratase of Glaesserella parasuis serovar 5 (strain SH0165) (Haemophilus parasuis).